We begin with the raw amino-acid sequence, 215 residues long: MAPMKLYGSTLSWNVTRCVAVLEEAGAEYEIVPLDFSKGEHKAPDHLARNPFGQVPALQDGDLFLWESRAICKYVCRKNKPELLKDGDLKESAMVDVWLEVESNQYTPALNPILFQCLIRPMMFGAPPDEKVVEENLEKLKKVLEVYEARLTKCKYLAGDYISVADLSHVAGTVCLGATPHASVLDAYPHVKAWWTDLMARPSSQKVASLMKPPA.

The 82-residue stretch at 2-83 (APMKLYGSTL…YVCRKNKPEL (82 aa)) folds into the GST N-terminal domain. Glutathione-binding positions include serine 12, 41–42 (HK), 54–55 (QV), and 67–68 (ES). In terms of domain architecture, GST C-terminal spans 88-215 (DLKESAMVDV…KVASLMKPPA (128 aa)).

Belongs to the GST superfamily. Phi family. Constitutively expressed in roots. Expressed in anthers, callus, panicles, sheaths and stems (at protein level).

It catalyses the reaction RX + glutathione = an S-substituted glutathione + a halide anion + H(+). In terms of biological role, conjugation of reduced glutathione to a wide number of exogenous and endogenous hydrophobic electrophiles. The polypeptide is Probable glutathione S-transferase GSTF2 (GSTF2) (Oryza sativa subsp. japonica (Rice)).